Reading from the N-terminus, the 79-residue chain is Pigment-dispersing hormone type 1 (79 aa).

The signal sequence occupies residues 1 to 22 (MRSAVVVALLVMVAMSLQLTAA). Position 76 is an alanine amide (alanine 76).

This sequence belongs to the arthropod PDH family. As to expression, eyestalk.

The protein resides in the secreted. The pigment-dispersing hormone causes the migration of the distal retinal pigment into the proximal end of the pigment chromatophore cells and thus decreases the amount of light entering the retinulas. May also function as a neurotransmitter and/or neuromodulator. The sequence is that of Pigment-dispersing hormone type 1 (PDH1) from Penaeus vannamei (Whiteleg shrimp).